Here is a 263-residue protein sequence, read N- to C-terminus: MENKNVIQKMREKTPLIHCITNYVTINDCANILLSFGASPAMCEAYDEVYDFVSISSALYINLGTLTKEQETAAVLASISAKNHNVPVVIDPVGCPAIKRKVEVINRMAEVGRIDIIKGNIGEIKFLAGMDSETRGVDSLDNGENALDACTQLAKKYNCIVAATGEKDFVSDGKRGSVIKNGTEMLTKVTGAGCMLGALCAATCANFEDKLVSTTAAILSMNIAGEKAYEKAQLPGSFRIALIDNIYMISDEEIWERGNVEWK.

Substrate is bound at residue Met-42. Residues Lys-118 and Thr-164 each coordinate ATP. Substrate is bound at residue Gly-191.

It belongs to the Thz kinase family. Mg(2+) serves as cofactor.

It catalyses the reaction 5-(2-hydroxyethyl)-4-methylthiazole + ATP = 4-methyl-5-(2-phosphooxyethyl)-thiazole + ADP + H(+). Its pathway is cofactor biosynthesis; thiamine diphosphate biosynthesis; 4-methyl-5-(2-phosphoethyl)-thiazole from 5-(2-hydroxyethyl)-4-methylthiazole: step 1/1. In terms of biological role, catalyzes the phosphorylation of the hydroxyl group of 4-methyl-5-beta-hydroxyethylthiazole (THZ). This chain is Hydroxyethylthiazole kinase 1, found in Clostridium botulinum (strain 657 / Type Ba4).